The sequence spans 269 residues: uncharacterized protein (269 aa).

Residues 3–105 constitute a DNA-binding region (ompR/PhoB-type); the sequence is WIINDNIEFW…VPRRGFKIHN (103 aa).

To V.cholerae cholera toxin transcriptional activator (ToxR).

This is an uncharacterized protein from Escherichia coli (strain K12).